Here is a 322-residue protein sequence, read N- to C-terminus: Sideroflexin-1 (322 aa).

Ser-2 bears the N-acetylserine mark. The Mitochondrial matrix segment spans residues 2 to 102; sequence SGELPPNINI…MSAQVPMNMT (101 aa). The chain crosses the membrane as a helical span at residues 103–120; sequence ITGCMMTFYRTTPAVLFW. Residues 121–146 are Mitochondrial intermembrane-facing; sequence QWVNQSFNAVVNYTNRSGDAPLTVNE. A helical membrane pass occupies residues 147–167; that stretch reads LGTAYVSATTGAVATALGLNA. Over 168–174 the chain is Mitochondrial matrix; sequence LTKRVSP. The chain crosses the membrane as a helical span at residues 175–195; that stretch reads LVGRFVPFAAVAAANCINIPL. The Mitochondrial intermembrane portion of the chain corresponds to 196-228; sequence MRQRELKVGIPVTDENGNRLGESASAAKQAITQ. The helical transmembrane segment at 229 to 249 threads the bilayer; that stretch reads VVVSRILMAAPGMAIPPFIMN. Topologically, residues 250-266 are mitochondrial matrix; that stretch reads TLEKKAFLKRFPWMSAP. A helical transmembrane segment spans residues 267–287; that stretch reads VQVGIVGFCLVFATPLCCALF. Topologically, residues 288 to 322 are mitochondrial intermembrane; it reads PQKSSMSVTSLEAELQARIRETYPELRRVYFNKGL.

The protein belongs to the sideroflexin family.

The protein localises to the mitochondrion inner membrane. It catalyses the reaction L-serine(in) = L-serine(out). The enzyme catalyses L-alanine(in) = L-alanine(out). It carries out the reaction L-cysteine(in) = L-cysteine(out). In terms of biological role, amino acid transporter importing serine, an essential substrate of the mitochondrial branch of the one-carbon pathway, into mitochondria. Mitochondrial serine is then converted to glycine and formate, which exits to the cytosol where it is used to generate the charged folates that serve as one-carbon donors. May also transport other amino acids including alanine and cysteine. The polypeptide is Sideroflexin-1 (SFXN1) (Ovis aries (Sheep)).